The chain runs to 1482 residues: Glutamate receptor ionotropic, NMDA 2B (1482 aa).

The signal sequence occupies residues 1–26; that stretch reads MKPSAECCSPKFWLVLAVLAVSGSKA. Residues 27-557 lie on the Extracellular side of the membrane; that stretch reads RSQKSAPSIG…SAFLEPFSAD (531 aa). The N-linked (GlcNAc...) asparagine glycan is linked to asparagine 74. Cysteine 86 and cysteine 321 are disulfide-bonded. The Zn(2+) site is built by histidine 127 and glutamate 284. N-linked (GlcNAc...) asparagine glycans are attached at residues asparagine 341, asparagine 348, asparagine 444, and asparagine 491. Intrachain disulfides connect cysteine 429–cysteine 456 and cysteine 436–cysteine 457. L-glutamate-binding residues include threonine 514 and arginine 519. Residue asparagine 542 is glycosylated (N-linked (GlcNAc...) asparagine). A helical membrane pass occupies residues 558–576; the sequence is VWVMMFVMLLIVSAVAVFV. Residues 577-603 are Cytoplasmic-facing; that stretch reads FEYFSPVGYNRCLADGREPGGPSFTIG. An intramembrane region (discontinuously helical) is located at residues 604 to 623; it reads KAIWLLWGLVFNNSVPVQNP. The segment at 604–623 is pore-forming; the sequence is KAIWLLWGLVFNNSVPVQNP. Residues 624-630 are Cytoplasmic-facing; sequence KGTTSKI. A helical membrane pass occupies residues 631–646; that stretch reads MVSVWAFFAVIFLASY. The Extracellular segment spans residues 647–817; the sequence is TANLAAFMIQ…VMSSQLDIDN (171 aa). Asparagine 688 is a glycosylation site (N-linked (GlcNAc...) asparagine). Residues 690-691 and aspartate 732 each bind L-glutamate; that span reads ST. An intrachain disulfide couples cysteine 746 to cysteine 801. The chain crosses the membrane as a helical span at residues 818 to 837; it reads MAGVFYMLGAAMALSLITFI. Topologically, residues 838–1482 are cytoplasmic; that stretch reads CEHLFYWQFR…EKLSSIESDV (645 aa). Residues serine 882, serine 886, serine 917, and serine 920 each carry the phosphoserine modification. Tyrosine 962 and tyrosine 1039 each carry phosphotyrosine. 3 positions are modified to phosphoserine: serine 1058, serine 1061, and serine 1064. A disordered region spans residues 1074 to 1097; that stretch reads EGNAAKRRKQQYKDSLKKRPASAK. 2 positions are modified to phosphotyrosine: tyrosine 1109 and tyrosine 1133. Serine 1143 carries the post-translational modification Phosphoserine. Tyrosine 1155 is modified (phosphotyrosine). The tract at residues 1162 to 1194 is disordered; that stretch reads FKRDSVSGGGPCTNRSHLKHGTGDKHGVVGGVP. Phosphoserine is present on residues serine 1255 and serine 1259. Positions 1266–1277 are enriched in low complexity; the sequence is PAAPVAVSSNAS. The disordered stretch occupies residues 1266–1301; sequence PAAPVAVSSNASTTKYPQSPTNSKAQKKNRNKLRRQ. A compositionally biased stretch (polar residues) spans 1278–1289; sequence TTKYPQSPTNSK. A compositionally biased stretch (basic residues) spans 1290–1301; the sequence is AQKKNRNKLRRQ. The interval 1292-1304 is interaction with DAPK1; it reads KKNRNKLRRQHSY. At serine 1303 the chain carries Phosphoserine; by DAPK1. Tyrosine 1472 is subject to Phosphotyrosine. Residues 1480-1482 carry the PDZ-binding motif; sequence SDV.

It belongs to the glutamate-gated ion channel (TC 1.A.10.1) family. NR2B/GRIN2B subfamily. Heterotetramer. Forms heterotetrameric channels composed of two GluN1/zeta subunits (GRIN1), and two identical GluN2/epsilon subunits (GRIN2A, GRIN2B, GRIN2C or GRIN2D) or GluN3 subunits (GRIN3A or GRIN3B) (in vitro). Can also form heterotetrameric channels that contain at least two GluN1 subunits and at least two different GluN2 subunits (or a combination of one GluN2 and one GluN3 subunits) (in vitro). In vivo, the subunit composition may depend on the expression levels of the different subunits. Found in a complex with GRIN1, GRIN3A and PPP2CB. Interacts with MAGI3. Interacts with HIP1 and NETO1. Interacts with PDZ domains of PATJ, DLG3 and DLG4. Interacts with DAPK1. Found in a complex with GRIN1 and PRR7. Interacts with PRR7. Interacts with CAMK2A. Interacts with ARC; preventing ARC oligomerization. Interacts with TMEM25. Interacts (via the extreme C-terminus) with FRMPD2 (via the second PDZ domain); the interaction is direct and is likely to promote NMDAR-mediated neural signal transmission. GRIN2A binds FRMPD2 with lower affinity than GRIN2B. Interacts with FAM81A; the interaction facilitates condensate formation via liquid-liquid phase separation. Post-translationally, phosphorylated on tyrosine residues. Phosphorylation at Ser-1303 by DAPK1 enhances synaptic NMDA receptor channel activity. Detected in brain (at protein level). Detected throughout the brain, and in brain stem trigeminal nucleus. Detected in forebrain.

Its subcellular location is the cell membrane. The protein localises to the postsynaptic cell membrane. It localises to the cell projection. It is found in the dendrite. The protein resides in the late endosome. Its subcellular location is the lysosome. The protein localises to the cytoplasm. It localises to the cytoskeleton. The catalysed reaction is Ca(2+)(in) = Ca(2+)(out). It catalyses the reaction Na(+)(in) = Na(+)(out). The enzyme catalyses K(+)(in) = K(+)(out). Component of N-methyl-D-aspartate (NMDA) receptors (NMDARs) that function as heterotetrameric, ligand-gated cation channels with high calcium permeability and voltage-dependent block by Mg(2+). Participates in synaptic plasticity for learning and memory formation by contributing to the long-term depression (LTD) of hippocampus membrane currents. Channel activation requires binding of the neurotransmitter L-glutamate to the GluN2 subunit, glycine or D-serine binding to the GluN1 subunit, plus membrane depolarization to eliminate channel inhibition by Mg(2+). NMDARs mediate simultaneously the potasium efflux and the influx of calcium and sodium. Each GluN2 subunit confers differential attributes to channel properties, including activation, deactivation and desensitization kinetics, pH sensitivity, Ca2(+) permeability, and binding to allosteric modulators. In concert with DAPK1 at extrasynaptic sites, acts as a central mediator for stroke damage. Its phosphorylation at Ser-1303 by DAPK1 enhances synaptic NMDA receptor channel activity inducing injurious Ca2+ influx through them, resulting in an irreversible neuronal death. This is Glutamate receptor ionotropic, NMDA 2B from Mus musculus (Mouse).